Here is a 360-residue protein sequence, read N- to C-terminus: Phosphate acyltransferase (360 aa).

Belongs to the PlsX family. As to quaternary structure, homodimer. Probably interacts with PlsY.

Its subcellular location is the cytoplasm. It catalyses the reaction a fatty acyl-[ACP] + phosphate = an acyl phosphate + holo-[ACP]. It functions in the pathway lipid metabolism; phospholipid metabolism. Catalyzes the reversible formation of acyl-phosphate (acyl-PO(4)) from acyl-[acyl-carrier-protein] (acyl-ACP). This enzyme utilizes acyl-ACP as fatty acyl donor, but not acyl-CoA. This Janthinobacterium sp. (strain Marseille) (Minibacterium massiliensis) protein is Phosphate acyltransferase.